A 454-amino-acid chain; its full sequence is GTPase Der (454 aa).

EngA-type G domains are found at residues 4 to 167 and 188 to 363; these read AIVA…SEDK and LQLA…ASWQ. Residues 10–17, 56–60, 121–124, 194–201, 241–245, and 306–309 contribute to the GTP site; these read GKPNVGKS, DTPGL, NKTE, GRPNCGKS, DTAGV, and NKCD. The KH-like domain maps to 364–450; that stretch reads KRVTTGTLNQ…PVRLSFVKGK (87 aa).

The protein belongs to the TRAFAC class TrmE-Era-EngA-EngB-Septin-like GTPase superfamily. EngA (Der) GTPase family. As to quaternary structure, associates with the 50S ribosomal subunit.

GTPase that plays an essential role in the late steps of ribosome biogenesis. This chain is GTPase Der, found in Orientia tsutsugamushi (strain Boryong) (Rickettsia tsutsugamushi).